The chain runs to 109 residues: Period circadian protein (109 aa).

2 stretches are compositionally biased toward polar residues: residues glutamine 42–proline 56 and serine 68–methionine 80. The tract at residues glutamine 42–lysine 109 is disordered. Over residues glycine 81–serine 97 the composition is skewed to low complexity.

As to quaternary structure, forms a heterodimer with timeless (TIM); the complex then translocates into the nucleus. Post-translationally, phosphorylated with a circadian rhythmicity, probably by the double-time protein (dbt). Phosphorylation could be implicated in the stability of per monomer and in the formation of heterodimer per-tim.

It is found in the nucleus. The protein resides in the cytoplasm. It localises to the perinuclear region. Essential for biological clock functions. Determines the period length of circadian and ultradian rhythms; an increase in PER dosage leads to shortened circadian rhythms and a decrease leads to lengthened circadian rhythms. Essential for the circadian rhythmicity of locomotor activity, eclosion behavior, and for the rhythmic component of the male courtship song that originates in the thoracic nervous system. The biological cycle depends on the rhythmic formation and nuclear localization of the TIM-PER complex. Light induces the degradation of TIM, which promotes elimination of PER. Nuclear activity of the heterodimer coordinatively regulates PER and TIM transcription through a negative feedback loop. Behaves as a negative element in circadian transcriptional loop. Does not appear to bind DNA, suggesting indirect transcriptional inhibition. The polypeptide is Period circadian protein (per) (Musca domestica (House fly)).